We begin with the raw amino-acid sequence, 396 residues long: Pyruvate dehydrogenase E1 component subunit alpha type I, mitochondrial (396 aa).

The transit peptide at 1–25 (MIFVFANIFKVPTVSPSVMAISVRL) directs the protein to the mitochondrion. Pyruvate is bound by residues H88, Y114, R115, G153, G161, V163, D192, G193, A194, N221, and Y223. Y114 and R115 together coordinate thiamine diphosphate. 6 residues coordinate thiamine diphosphate: G161, V163, D192, G193, A194, and N221. A Mg(2+)-binding site is contributed by D192. Positions 221 and 223 each coordinate Mg(2+). H288 provides a ligand contact to thiamine diphosphate. 2 positions are modified to phosphoserine: S289 and S296.

Heterotetramer of two PDHA1 and two PDHB subunits. The heterotetramer interacts with DLAT, and is part of the multimeric pyruvate dehydrogenase complex that contains multiple copies of pyruvate dehydrogenase (E1), dihydrolipoamide acetyltransferase (DLAT, E2) and lipoamide dehydrogenase (DLD, E3). Thiamine diphosphate is required as a cofactor. Requires Mg(2+) as cofactor.

The protein localises to the mitochondrion matrix. The catalysed reaction is N(6)-[(R)-lipoyl]-L-lysyl-[protein] + pyruvate + H(+) = N(6)-[(R)-S(8)-acetyldihydrolipoyl]-L-lysyl-[protein] + CO2. Its activity is regulated as follows. Pyruvate dehydrogenase activity is inhibited by phosphorylation of PDHA1; it is reactivated by dephosphorylation. Its function is as follows. The pyruvate dehydrogenase complex catalyzes the overall conversion of pyruvate to acetyl-CoA and CO(2), and thereby links the glycolytic pathway to the tricarboxylic cycle. In Ascaris suum (Pig roundworm), this protein is Pyruvate dehydrogenase E1 component subunit alpha type I, mitochondrial.